Consider the following 253-residue polypeptide: Transmembrane protein 51 (253 aa).

The next 2 helical transmembrane spans lie at 17 to 37 (IGLGMLVLGVIMAMWNLVPGF) and 65 to 85 (VAYVLVGAGVMLLLLSICLSI). Disordered stretches follow at residues 93 to 133 (QGED…YVPS) and 164 to 253 (LTGL…RPPD). Positions 113–124 (EDSQEEEEEDEE) are enriched in acidic residues. At S115 the chain carries Phosphoserine. Residues 164-176 (LTGLDETTPTSTR) show a composition bias toward polar residues. Phosphoserine is present on residues S182 and S192. Positions 194 to 205 (LAKRLKPLKVRR) are enriched in basic residues. Positions 206 to 217 (IKSEKLHLKDFR) are enriched in basic and acidic residues. The segment covering 224–238 (NVPPPSIEPLTPPPQ) has biased composition (pro residues). Basic and acidic residues predominate over residues 242–253 (VQEKAPDTRPPD).

It is found in the membrane. This chain is Transmembrane protein 51 (TMEM51), found in Homo sapiens (Human).